The following is a 407-amino-acid chain: Nicotinate phosphoribosyltransferase (407 aa).

Histidine 224 is modified (phosphohistidine; by autocatalysis).

Belongs to the NAPRTase family. Post-translationally, transiently phosphorylated on a His residue during the reaction cycle. Phosphorylation strongly increases the affinity for substrates and increases the rate of nicotinate D-ribonucleotide production. Dephosphorylation regenerates the low-affinity form of the enzyme, leading to product release.

The catalysed reaction is nicotinate + 5-phospho-alpha-D-ribose 1-diphosphate + ATP + H2O = nicotinate beta-D-ribonucleotide + ADP + phosphate + diphosphate. The protein operates within cofactor biosynthesis; NAD(+) biosynthesis; nicotinate D-ribonucleotide from nicotinate: step 1/1. Functionally, catalyzes the synthesis of beta-nicotinate D-ribonucleotide from nicotinate and 5-phospho-D-ribose 1-phosphate at the expense of ATP. This Pseudomonas syringae pv. tomato (strain ATCC BAA-871 / DC3000) protein is Nicotinate phosphoribosyltransferase.